A 1320-amino-acid polypeptide reads, in one-letter code: MSLQGSYQHFCLWMFLGTTLALGQGQVSSRLRLAVLPEDQLQMKWREAEGSGLGFLVQVTPMAGDLEQELILTTKTPKATVGGLNPSKSYTLQIFELTDSGPILLARREFVIEDLKSQSLGRGSRRLAGATLEPTSLPLRGPDSEKTSEPSIAFTLSRDLPILDHPQFQCTPPTPADIIFLVDGSWSIGHNHFQQVKDFLASIITQFAIGPDKVQVGLTQYSGDPQTEWDLNSFQTKEQVLAAVHHLRYKGGNTFTGLALTHVLEQNLKPAAGVRPEAAKVLILVTDGKSQDDVRTAARILKDQDIDVFVVGVKNVDEAELKLLASQPLDITVHNVLDFPQLDTLAPLLSRLICQKIQGRGPVKPAAGTRVLDPLPTPTRLILTHATSSSIHLSWTPALYPPLKYLIVWQPSRGGAPKEVVVEGPVSSMELGNLTSSTEYLVSVLPVYESGVGKSLQGRATTAPLPPPGPLTLAAVTPRTLHVTWPPSAGVTQYLVQYLLATSTGEEQKREVHVGQPEVLLDGLEPGQDYDVSVQSLRGPEASEVQSIRARTSALGPPRHLTFSDVRYNSTCVSWEAQRPVRLVKVSYISSDGSHSGQTQVPGNLTSATLGPLSSSTMYTVRVTCFYLGGGSSVLTGHVTTQKAPSPGQLSVMELPGDAVKLSWLATALSGVLVYQIKWMPLGEGKAREISVPGTLGTATLPGLMKHVEYEITILAYYRDGTRSDPVSLRYTPSAASRSPPSSLALSSETPNSLQVNWTPPSGHVLHYRLNYTLASGSGPEKSISVPGTRSHAVLRDLMSATKYRVLVSAVYRAGESMAVSATYRTAACPALHPDSSLSGFDLMVAFGLVAKEYASIRGVAMEPSALGVVPTFTLFKDAQLMRRVSDIYPATLPPEHTIVFLVRLLPETPREAFALWQMMAEDFQPILGVLLDAGRKSLTYFNHDSRAALQEVTFDLQDAKKIFFGSFHKVHIAVGHSKVRLYVDCRKVAERPIGDAGSPPTGGFITLGRLAKARGPRSSSATFQLQMLQIVCSDTWADKDRCCEIPALRDGETCPAFPSACAYSSETPGPPGPQGPPGLPGRNGPPGQQGHPGPKGEPGPPGQTGPEGPGGQQGSPGTQGRAVQGPMGPPGAKGEKGDQGLSGLQGLSGQQGIPGKTGLQGPKGMRGLEGPAGLPGPPGPRGFQGLAGARGTNGERGAPGAVGPTGLPGSKGERGEKGEPQSLATIFQLVSQACESAIRTHVLKLNSFLHENARPPMPFMAETAKLGRPRSIDPGLHNEALLPGDWGHILRPEDQGEPVTISHTSNPRLQEVQTPESLE.

An N-terminal signal peptide occupies residues 1 to 25; sequence MSLQGSYQHFCLWMFLGTTLALGQG. The Fibronectin type-III 1 domain occupies 27 to 118; sequence VSSRLRLAVL…EFVIEDLKSQ (92 aa). Residues 177–352 form the VWFA domain; the sequence is DIIFLVDGSW…DTLAPLLSRL (176 aa). Fibronectin type-III domains follow at residues 377 to 466, 467 to 556, 557 to 644, 646 to 735, and 740 to 831; these read TPTR…APLP, PPGP…SALG, PPRH…TQKA, SPGQ…TPSA, and PPSS…ACPA. N-linked (GlcNAc...) asparagine glycosylation occurs at N433. N-linked (GlcNAc...) asparagine glycosylation is found at N569 and N604. The disordered stretch occupies residues 728–752; the sequence is SLRYTPSAASRSPPSSLALSSETPN. Residues 733–748 are compositionally biased toward low complexity; it reads PSAASRSPPSSLALSS. The N-linked (GlcNAc...) asparagine glycan is linked to N771. The 196-residue stretch at 840-1035 folds into the Laminin G-like domain; that stretch reads GFDLMVAFGL…LQMLQIVCSD (196 aa). 2 disordered regions span residues 1064-1220 and 1291-1320; these read YSSE…EKGE and LRPE…ESLE. Residues 1069 to 1080 show a composition bias toward pro residues; sequence PGPPGPQGPPGL. Collagen-like domains lie at 1069–1122, 1125–1174, and 1165–1221; these read PGPP…TQGR, QGPM…GPAG, and GMRG…KGEP. Residues 1081-1093 show a composition bias toward low complexity; it reads PGRNGPPGQQGHP. Over residues 1106–1115 the composition is skewed to gly residues; the sequence is GPEGPGGQQG. The span at 1140–1152 shows a compositional bias: low complexity; sequence QGLSGLQGLSGQQ. Residues 1302-1320 show a composition bias toward polar residues; sequence ISHTSNPRLQEVQTPESLE.

Its subcellular location is the secreted. It localises to the extracellular space. Its function is as follows. Probable collagen protein. The sequence is that of Collagen alpha-1(XX) chain (Col20a1) from Mus musculus (Mouse).